The sequence spans 1807 residues: Atrochrysone carboxylic acid synthase Agnpks1 (1807 aa).

Positions 41–173 (LFRELHNHSK…ITGAQVIRQA (133 aa)) are N-terminal acylcarrier protein transacylase domain (SAT). In terms of domain architecture, Ketosynthase family 3 (KS3) spans 411-845 (QSKIAIVGMS…GGNTTILLEE (435 aa)). Residues cysteine 584, histidine 720, and histidine 763 each act as for beta-ketoacyl synthase activity in the active site. The malonyl-CoA:ACP transacylase (MAT) domain stretch occupies residues 946-1265 (FTFTGQGASY…SLAALHCAGV (320 aa)). Positions 1334–1653 (TSTVHQIIQE…RILLSRFFSA (320 aa)) are product template (PT) domain. Positions 1338-1473 (HQIIQESIDG…ATLIYGDPSE (136 aa)) are N-terminal hotdog fold. One can recognise a PKS/mFAS DH domain in the interval 1338–1648 (HQIIQESIDG…FRRYPRILLS (311 aa)). Catalysis depends on histidine 1370, which acts as the Proton acceptor; for dehydratase activity. The segment at 1500-1648 (VANRFNHQMA…FRRYPRILLS (149 aa)) is C-terminal hotdog fold. Catalysis depends on aspartate 1559, which acts as the Proton donor; for dehydratase activity. The 75-residue stretch at 1732-1806 (DTTTAKAIQI…DLRSWLEEYY (75 aa)) folds into the Carrier domain. Position 1766 is an O-(pantetheine 4'-phosphoryl)serine (serine 1766).

The enzyme catalyses holo-[ACP] + 8 malonyl-CoA + 8 H(+) = atrochrysone carboxyl-[ACP] + 8 CO2 + 8 CoA + 2 H2O. It participates in secondary metabolite biosynthesis. Functionally, non-reducing polyketide synthase; part of the gene cluster that mediates the biosynthesis of agnestins, dihydroxy-xanthone metabolites. The pathway begins with the assembly and cyclization of atrochrysone thioester by the non-reducing polyketide synthase Agnpks1. The atrochrysone carboxyl ACP thioesterase AgnL7 then breaks the thioester bond and releases the atrochrysone carboxylic acid as the first enzyme-free intermediate. The decarboxylase AgnL1 then catalyzes the concerted decarboxylation-elimination required to convert atochrysone carboxylic acid into emodin anthrone, which is further oxidized to emodin by the anthrone oxygenase AgnL2. Emodin then undergoes reduction catalyzed by the oxidoreductase AgnL4 to yield the dihydroquinone tautomer which is the substrate for reduction by the short chain dehydrogenase AgnL6 reduction to produce hydroxyketone, followed by AgnL8 dehydration and likely spontaneous autoxidation to chrysophanol. Baeyer-Villiger oxidation by the oxidase AgnL3 leads to monodictyphenone via cleavage of the C-10/C-10a bond of chrysophanol. Alternative cleavage at the C-4a/C-10 bond of chrysophanol also leads to the formation some cephalone F. Further conversion to agnestins A and B, requires reduction to dihydro-monodictyphenone, oxidation to agnestin C probably via an epoxide, and rearrangement to either agnestin A or agnestin B directly, although agnestin A or agnestin B can also interconvert. Within the cluster, AgnR1 is the only unassigned oxidoreductase present which could be involved in this conversion. However, AgnR1 seems not to be involved in this step, and thus genes involved in the proposed oxidation/reduction may be located elsewhere on the genome. Further agnestin A derivatives are probably formed by spontaneous decarboxylations, dehydrations and methanolysis reactions. In Paecilomyces divaricatus (Penicillium divaricatum), this protein is Atrochrysone carboxylic acid synthase Agnpks1.